Here is a 206-residue protein sequence, read N- to C-terminus: Small ribosomal subunit protein uS4 (206 aa).

The tract at residues 18–46 (NIWGRPKSPVNRREYGPGQHGQRRKGKIS) is disordered. Residues 94–154 (RRLDAVVYRA…DRSKQMVALI (61 aa)) enclose the S4 RNA-binding domain.

Belongs to the universal ribosomal protein uS4 family. As to quaternary structure, part of the 30S ribosomal subunit. Contacts protein S5. The interaction surface between S4 and S5 is involved in control of translational fidelity.

Functionally, one of the primary rRNA binding proteins, it binds directly to 16S rRNA where it nucleates assembly of the body of the 30S subunit. In terms of biological role, with S5 and S12 plays an important role in translational accuracy. This is Small ribosomal subunit protein uS4 from Roseobacter denitrificans (strain ATCC 33942 / OCh 114) (Erythrobacter sp. (strain OCh 114)).